The sequence spans 409 residues: Isocitrate dehydrogenase [NADP] 1 (409 aa).

Residues Lys75, Thr78, Thr80, and Arg85 each coordinate NADP(+). Mn(2+) is bound by residues Asp255, Asp278, and Asp282. 5 residues coordinate NADP(+): Gly313, Thr314, Val315, His318, and Asn331.

Belongs to the isocitrate and isopropylmalate dehydrogenases family. Homodimer. Requires Mg(2+) as cofactor. Mn(2+) serves as cofactor.

The enzyme catalyses D-threo-isocitrate + NADP(+) = 2-oxoglutarate + CO2 + NADPH. Its function is as follows. Catalyzes the oxidative decarboxylation of isocitrate to 2-oxoglutarate and carbon dioxide with the concomitant reduction of NADP(+). In Mycobacterium bovis (strain ATCC BAA-935 / AF2122/97), this protein is Isocitrate dehydrogenase [NADP] 1 (icd).